A 105-amino-acid chain; its full sequence is DNA-directed RNA polymerase RPB9 homolog (105 aa).

Residues Cys-4, Cys-7, Cys-24, Cys-26, Cys-73, Cys-76, and Cys-96 each coordinate Zn(2+). Residues 4-26 (CKACSSCMVRTYVDGNIIFRCSC) form a C4-type; atypical zinc finger.

This sequence belongs to the Asfivirus DNA-directed RNA polymerase RPB9 homolog family. Part of the viral DNA-directed RNA polymerase that consists of 8 polII-like subunits (RPB1, RPB2, RPB3, RPB5, RPB6, RPB7, RPB9, RPB10), a capping enzyme and a termination factor.

It is found in the host cytoplasm. Component of the DNA-directed RNA polymerase (RNAP) that catalyzes the transcription in the cytoplasm of viral DNA into RNA using the four ribonucleoside triphosphates as substrates. The polypeptide is DNA-directed RNA polymerase RPB9 homolog (African swine fever virus (isolate Pig/Kenya/KEN-50/1950) (ASFV)).